The chain runs to 50 residues: U3-ctenitoxin-Asp1a (50 aa).

Expressed by the venom gland.

The protein localises to the secreted. In terms of biological role, possible neurotoxin. The polypeptide is U3-ctenitoxin-Asp1a (Ancylometes sp. (South American fishing spider)).